We begin with the raw amino-acid sequence, 225 residues long: Biosynthetic peptidoglycan transglycosylase (225 aa).

A helical membrane pass occupies residues 12–32 (IWFVAWRFLLLFVIVLFLFRF).

It belongs to the glycosyltransferase 51 family.

It is found in the cell inner membrane. It carries out the reaction [GlcNAc-(1-&gt;4)-Mur2Ac(oyl-L-Ala-gamma-D-Glu-L-Lys-D-Ala-D-Ala)](n)-di-trans,octa-cis-undecaprenyl diphosphate + beta-D-GlcNAc-(1-&gt;4)-Mur2Ac(oyl-L-Ala-gamma-D-Glu-L-Lys-D-Ala-D-Ala)-di-trans,octa-cis-undecaprenyl diphosphate = [GlcNAc-(1-&gt;4)-Mur2Ac(oyl-L-Ala-gamma-D-Glu-L-Lys-D-Ala-D-Ala)](n+1)-di-trans,octa-cis-undecaprenyl diphosphate + di-trans,octa-cis-undecaprenyl diphosphate + H(+). It participates in cell wall biogenesis; peptidoglycan biosynthesis. Peptidoglycan polymerase that catalyzes glycan chain elongation from lipid-linked precursors. The polypeptide is Biosynthetic peptidoglycan transglycosylase (Marinomonas sp. (strain MWYL1)).